Here is a 464-residue protein sequence, read N- to C-terminus: UPF0210 protein MA_1691 (464 aa).

It belongs to the UPF0210 family.

The sequence is that of UPF0210 protein MA_1691 from Methanosarcina acetivorans (strain ATCC 35395 / DSM 2834 / JCM 12185 / C2A).